The following is a 129-amino-acid chain: Short-chain dehydrogenase/reductase homolog YusR (129 aa).

It belongs to the short-chain dehydrogenases/reductases (SDR) family.

The sequence is that of Short-chain dehydrogenase/reductase homolog YusR (yusR) from Bacillus subtilis (strain 168).